Reading from the N-terminus, the 465-residue chain is Tubulin gamma chain (465 aa).

A GTP-binding site is contributed by 144-150 (AGGTGSG).

This sequence belongs to the tubulin family.

The protein resides in the cytoplasm. It is found in the cytoskeleton. Its subcellular location is the microtubule organizing center. The protein localises to the spindle pole body. In terms of biological role, tubulin is the major constituent of microtubules. The gamma chain is found at microtubule organizing centers (MTOC) such as the spindle poles or the centrosome, suggesting that it is involved in the minus-end nucleation of microtubule assembly. The protein is Tubulin gamma chain (TUB4) of Candida glabrata (strain ATCC 2001 / BCRC 20586 / JCM 3761 / NBRC 0622 / NRRL Y-65 / CBS 138) (Yeast).